A 341-amino-acid polypeptide reads, in one-letter code: Small ribosomal subunit biogenesis GTPase RsgA (341 aa).

The CP-type G domain maps to 112–268 (RQQLIAANLD…LIDTPGMREL (157 aa)). GTP is bound by residues 157–160 (TKVD) and 210–218 (GSSGAGKST). Residues C290, C295, H297, and C303 each contribute to the Zn(2+) site.

The protein belongs to the TRAFAC class YlqF/YawG GTPase family. RsgA subfamily. Monomer. Associates with 30S ribosomal subunit, binds 16S rRNA. Zn(2+) is required as a cofactor.

Its subcellular location is the cytoplasm. One of several proteins that assist in the late maturation steps of the functional core of the 30S ribosomal subunit. Helps release RbfA from mature subunits. May play a role in the assembly of ribosomal proteins into the subunit. Circularly permuted GTPase that catalyzes slow GTP hydrolysis, GTPase activity is stimulated by the 30S ribosomal subunit. This Xylella fastidiosa (strain 9a5c) protein is Small ribosomal subunit biogenesis GTPase RsgA.